We begin with the raw amino-acid sequence, 1070 residues long: DNA-directed RNA polymerase subunit beta (1070 aa).

This sequence belongs to the RNA polymerase beta chain family. As to quaternary structure, in plastids the minimal PEP RNA polymerase catalytic core is composed of four subunits: alpha, beta, beta', and beta''. When a (nuclear-encoded) sigma factor is associated with the core the holoenzyme is formed, which can initiate transcription.

It is found in the plastid. The protein localises to the chloroplast. The catalysed reaction is RNA(n) + a ribonucleoside 5'-triphosphate = RNA(n+1) + diphosphate. In terms of biological role, DNA-dependent RNA polymerase catalyzes the transcription of DNA into RNA using the four ribonucleoside triphosphates as substrates. In Angiopteris evecta (Mule's foot fern), this protein is DNA-directed RNA polymerase subunit beta.